A 453-amino-acid polypeptide reads, in one-letter code: Autophagy-related protein 21 (453 aa).

The WD 1 repeat unit spans residues 4 to 137 (LRFNQDASCC…NDQIFIYDIS (134 aa)). A disordered region spans residues 177-207 (GNELDRIRSKSNNNNDQTNSDNGRSRTYSIN). A compositionally biased stretch (low complexity) spans 187 to 198 (SNNNNDQTNSDN). WD repeat units follow at residues 252-347 (NLKP…RTDD) and 419-453 (FDNK…SHFI). A L/FRRG motif motif is present at residues 310–314 (FRRGS).

It belongs to the WD repeat PROPPIN family.

Its subcellular location is the cytoplasm. It is found in the membrane. The protein localises to the vacuole membrane. In terms of biological role, required for cytoplasm to vacuole transport (Cvt) vesicles formation and mitophagy. Involved in binding of phosphatidylethanolamine to ATG8 and in recruitment of ATG8 and ATG5 to the pre-autophagosomal structure. Protects ATG8 from ARG4-mediated cleavage. This Candida glabrata (strain ATCC 2001 / BCRC 20586 / JCM 3761 / NBRC 0622 / NRRL Y-65 / CBS 138) (Yeast) protein is Autophagy-related protein 21 (ATG21).